We begin with the raw amino-acid sequence, 393 residues long: uncharacterized protein (393 aa).

This is an uncharacterized protein from Methanocaldococcus jannaschii (strain ATCC 43067 / DSM 2661 / JAL-1 / JCM 10045 / NBRC 100440) (Methanococcus jannaschii).